Reading from the N-terminus, the 642-residue chain is A-kinase anchor protein 8-like (642 aa).

The segment at 1–269 (MSYTGFVQGS…MRRTWKTWTT (269 aa)) is sufficient for activation of CTE-mediated expression. Residue Arg-209 is modified to Asymmetric dimethylarginine; alternate. Arg-209 bears the Omega-N-methylarginine; alternate mark. Arg-218, Arg-238, and Arg-248 each carry omega-N-methylarginine. The residue at position 258 (Lys-258) is an N6-acetyllysine. Positions 265–382 (KTWTTADFRT…QDKQKKRQRD (118 aa)) are disordered. Thr-268 bears the Phosphothreonine mark. Residues 275 to 280 (KKKKRK) carry the Nuclear localization signal motif. Positions 281-297 (QGGSPDEPDSKATRTDC) match the Nuclear export signal (NES) motif. At Ser-284 the chain carries Phosphoserine. Positions 288 to 297 (PDSKATRTDC) are enriched in basic and acidic residues. Residue Thr-293 is modified to Phosphothreonine. Ser-298 is modified (phosphoserine). Positions 299–315 (DNSDSDNDEGTEGEAAE) are enriched in acidic residues. Residues 338 to 350 (EDGREEGKEDPEK) are compositionally biased toward basic and acidic residues. The short motif at 363–365 (KRK) is the Nuclear localization signal element. 2 consecutive C2H2 AKAP95-type zinc fingers follow at residues 392 to 414 (CSLC…SKFH) and 485 to 508 (CAAC…TMDH). Positions 546–642 (GENPFTDNPE…EDDEEGGGGP (97 aa)) are disordered. The span at 553–564 (NPEEEKEQDEVE) shows a compositional bias: acidic residues. A compositionally biased stretch (pro residues) spans 585 to 605 (AQPPVPLEPAPGTTTPPPPPP). Positions 631–642 (DMEDDEEGGGGP) are enriched in acidic residues.

It belongs to the AKAP95 family. Interacts (via N-terminus) with DHX9 (via RGG region). Interacts with TMPO isoform Beta, PRPF40A, RNF43, lamin-B. Interacts with HDAC3; increased during mitosis. In terms of processing, phosphorylated on serine or threonine residues possibly by PKA.

The protein resides in the nucleus. It localises to the nucleus matrix. It is found in the nucleus speckle. The protein localises to the PML body. Its subcellular location is the cytoplasm. Its function is as follows. Could play a role in constitutive transport element (CTE)-mediated gene expression by association with DHX9. Increases CTE-dependent nuclear unspliced mRNA export. Proposed to target PRKACA to the nucleus but does not seem to be implicated in the binding of regulatory subunit II of PKA. May be involved in nuclear envelope breakdown and chromatin condensation. May be involved in anchoring nuclear membranes to chromatin in interphase and in releasing membranes from chromating at mitosis. May regulate the initiation phase of DNA replication when associated with TMPO isoform Beta. Required for cell cycle G2/M transition and histone deacetylation during mitosis. In mitotic cells recruits HDAC3 to the vicinity of chromatin leading to deacetylation and subsequent phosphorylation at 'Ser-10' of histone H3; in this function seems to act redundantly with AKAP8. May be involved in regulation of pre-mRNA splicing. The sequence is that of A-kinase anchor protein 8-like (Akap8l) from Mus musculus (Mouse).